A 384-amino-acid polypeptide reads, in one-letter code: Anhydro-N-acetylmuramic acid kinase (384 aa).

ATP is bound at residue 12–19 (GTSLDGVD).

Belongs to the anhydro-N-acetylmuramic acid kinase family.

The catalysed reaction is 1,6-anhydro-N-acetyl-beta-muramate + ATP + H2O = N-acetyl-D-muramate 6-phosphate + ADP + H(+). The protein operates within amino-sugar metabolism; 1,6-anhydro-N-acetylmuramate degradation. It functions in the pathway cell wall biogenesis; peptidoglycan recycling. Functionally, catalyzes the specific phosphorylation of 1,6-anhydro-N-acetylmuramic acid (anhMurNAc) with the simultaneous cleavage of the 1,6-anhydro ring, generating MurNAc-6-P. Is required for the utilization of anhMurNAc either imported from the medium or derived from its own cell wall murein, and thus plays a role in cell wall recycling. The protein is Anhydro-N-acetylmuramic acid kinase of Cronobacter sakazakii (strain ATCC BAA-894) (Enterobacter sakazakii).